The chain runs to 77 residues: MGGISIWQLLIIALIVVLLFGTKKLRSLGGDLGGAIKGFKNAMSDEEKKALEDKEAAAQTTQQATEKKPEADKKEQA.

A helical transmembrane segment spans residues 1–21; it reads MGGISIWQLLIIALIVVLLFG. 2 stretches are compositionally biased toward basic and acidic residues: residues 47-56 and 65-77; these read EKKALEDKEA and TEKK…KEQA. A disordered region spans residues 47 to 77; sequence EKKALEDKEAAAQTTQQATEKKPEADKKEQA.

The protein belongs to the TatA/E family. In terms of assembly, the Tat system comprises two distinct complexes: a TatABC complex, containing multiple copies of TatA, TatB and TatC subunits, and a separate TatA complex, containing only TatA subunits. Substrates initially bind to the TatABC complex, which probably triggers association of the separate TatA complex to form the active translocon.

It localises to the cell inner membrane. Its function is as follows. Part of the twin-arginine translocation (Tat) system that transports large folded proteins containing a characteristic twin-arginine motif in their signal peptide across membranes. TatA could form the protein-conducting channel of the Tat system. The protein is Sec-independent protein translocase protein TatA of Shewanella amazonensis (strain ATCC BAA-1098 / SB2B).